The following is a 232-amino-acid chain: Ubiquinone biosynthesis O-methyltransferase (232 aa).

S-adenosyl-L-methionine-binding residues include arginine 36, glycine 55, aspartate 76, and leucine 120.

It belongs to the methyltransferase superfamily. UbiG/COQ3 family.

The catalysed reaction is a 3-demethylubiquinol + S-adenosyl-L-methionine = a ubiquinol + S-adenosyl-L-homocysteine + H(+). It catalyses the reaction a 3-(all-trans-polyprenyl)benzene-1,2-diol + S-adenosyl-L-methionine = a 2-methoxy-6-(all-trans-polyprenyl)phenol + S-adenosyl-L-homocysteine + H(+). It functions in the pathway cofactor biosynthesis; ubiquinone biosynthesis. In terms of biological role, O-methyltransferase that catalyzes the 2 O-methylation steps in the ubiquinone biosynthetic pathway. In Pseudomonas entomophila (strain L48), this protein is Ubiquinone biosynthesis O-methyltransferase.